The following is a 100-amino-acid chain: Small ribosomal subunit protein uS14c (100 aa).

This sequence belongs to the universal ribosomal protein uS14 family. As to quaternary structure, part of the 30S ribosomal subunit.

The protein resides in the plastid. It is found in the chloroplast. Its function is as follows. Binds 16S rRNA, required for the assembly of 30S particles. This chain is Small ribosomal subunit protein uS14c, found in Helianthus annuus (Common sunflower).